Consider the following 346-residue polypeptide: NADH-ubiquinone oxidoreductase chain 2 (346 aa).

A run of 11 helical transmembrane segments spans residues 1–21 (MNPH…TITI), 25–45 (HWVL…PLIS), 60–80 (FLTQ…NAWA), 95–115 (CLLL…HFWF), 124–144 (LMTA…LLLM), 149–169 (LNPA…GWMG), 178–195 (ILAF…IILV), 200–219 (LALL…FMAL), 242–262 (ATLM…GFMP), 274–294 (EMTP…FFYL), and 326–346 (AILA…HAIV).

The protein belongs to the complex I subunit 2 family.

It is found in the mitochondrion inner membrane. The enzyme catalyses a ubiquinone + NADH + 5 H(+)(in) = a ubiquinol + NAD(+) + 4 H(+)(out). In terms of biological role, core subunit of the mitochondrial membrane respiratory chain NADH dehydrogenase (Complex I) that is believed to belong to the minimal assembly required for catalysis. Complex I functions in the transfer of electrons from NADH to the respiratory chain. The immediate electron acceptor for the enzyme is believed to be ubiquinone. The sequence is that of NADH-ubiquinone oxidoreductase chain 2 (MT-ND2) from Anas acuta (Northern pintail).